Reading from the N-terminus, the 107-residue chain is Inner membrane protein YiaW (107 aa).

Topologically, residues 1–6 (MFLDYF) are cytoplasmic. Residues 7–29 (ALGVLIFVFLVIFYGIIILHDIP) form a helical membrane-spanning segment. The Periplasmic portion of the chain corresponds to 30-43 (YLIAKKRNHPHADA). The chain crosses the membrane as a helical span at residues 44–66 (IHVAGWVSLFTLHVIWPFLWIWA). Residues 67–107 (TLYRPERGWGMQSHDSSVMQLQQRIAGLEKQLADIKSSSAE) are Cytoplasmic-facing.

To E.coli YibI.

The protein resides in the cell inner membrane. In Escherichia coli O157:H7, this protein is Inner membrane protein YiaW (yiaW).